The sequence spans 245 residues: 1-(5-phosphoribosyl)-5-[(5-phosphoribosylamino)methylideneamino] imidazole-4-carboxamide isomerase (245 aa).

D7 serves as the catalytic Proton acceptor. D129 (proton donor) is an active-site residue.

It belongs to the HisA/HisF family.

The protein resides in the cytoplasm. The catalysed reaction is 1-(5-phospho-beta-D-ribosyl)-5-[(5-phospho-beta-D-ribosylamino)methylideneamino]imidazole-4-carboxamide = 5-[(5-phospho-1-deoxy-D-ribulos-1-ylimino)methylamino]-1-(5-phospho-beta-D-ribosyl)imidazole-4-carboxamide. Its pathway is amino-acid biosynthesis; L-histidine biosynthesis; L-histidine from 5-phospho-alpha-D-ribose 1-diphosphate: step 4/9. The protein is 1-(5-phosphoribosyl)-5-[(5-phosphoribosylamino)methylideneamino] imidazole-4-carboxamide isomerase of Salmonella heidelberg (strain SL476).